Here is a 201-residue protein sequence, read N- to C-terminus: Single-stranded DNA-binding protein DdrA (201 aa).

This sequence belongs to the RAD52 family. In terms of assembly, the truncated form (1-160) of DdrA forms heptameric rings that can assemble into a 3-ring structure.

Its function is as follows. ssDNA-binding protein that contributes to the ionizing radiation resistance of D.deserti. Plays a role in DNA repair and genome reconstitution, in a RecA-independent process, since DdrA is essential for recovery from severe genomic fragmentation as a result of exposure to severe levels of ionizing radiation in an environment lacking nutrients. In vitro, binds to the 3'-ends of single-stranded DNA, and probably protects them from nuclease degradation. Thus, DdrA is part of a DNA end-protection system that helps to preserve genome integrity following irradiation or desiccation. In Deinococcus deserti (strain DSM 17065 / CIP 109153 / LMG 22923 / VCD115), this protein is Single-stranded DNA-binding protein DdrA (ddrA).